The primary structure comprises 725 residues: Probable dipeptidyl-peptidase 5 (725 aa).

Positions 1-18 (MGALRWLSIAATASTALA) are cleaved as a signal peptide. N-linked (GlcNAc...) asparagine glycosylation is found at Asn-75, Asn-96, Asn-153, Asn-258, Asn-383, and Asn-453. Ser-563 (charge relay system) is an active-site residue. N-linked (GlcNAc...) asparagine glycosylation occurs at Asn-610. Active-site charge relay system residues include Asp-646 and His-678.

The protein belongs to the peptidase S9C family.

It is found in the secreted. Functionally, extracellular dipeptidyl-peptidase which removes N-terminal dipeptides sequentially from polypeptides having unsubstituted N-termini. This chain is Probable dipeptidyl-peptidase 5 (dpp5), found in Aspergillus flavus (strain ATCC 200026 / FGSC A1120 / IAM 13836 / NRRL 3357 / JCM 12722 / SRRC 167).